The following is a 1486-amino-acid chain: Protein PRRC2B (1486 aa).

Disordered regions lie at residues 1 to 20, 39 to 306, 320 to 341, 385 to 519, and 531 to 658; these read MSDR…KYST, VIPR…FPLP, QMND…PLRQ, KFSD…AREE, and LDQK…EQLY. Residues 88–137 are compositionally biased toward polar residues; sequence ANKQDQQDPKSSSVTASQPPESQPQPGLQKSVSNLQKPTQSISQENTNSV. Residues serine 166, serine 168, serine 222, and serine 226 each carry the phosphoserine modification. Positions 219–235 are enriched in polar residues; sequence SAASLSASPTELGSRNA. Residue threonine 228 is modified to Phosphothreonine. A Glycyl lysine isopeptide (Lys-Gly) (interchain with G-Cter in SUMO2) cross-link involves residue lysine 251. Polar residues predominate over residues 288 to 300; sequence SPQSSENQTTVER. 2 positions are modified to phosphoserine: serine 387 and serine 415. Composition is skewed to basic and acidic residues over residues 422 to 433, 478 to 488, and 501 to 519; these read TDAKRTQEEGKD, HSAEDKEDKPP, and AVER…AREE. Serine 479 carries the post-translational modification Phosphoserine. A coiled-coil region spans residues 494–544; sequence IQSEMSEAVERARKRREEEERRAREERLAACAAKLKQLDQKCRQAQKANET. At serine 555 the chain carries Phosphoserine. Residues 600–611 are compositionally biased toward low complexity; sequence SNSSSSSSSSSS. Serine 621 is subject to Phosphoserine. Low complexity predominate over residues 638–656; sequence QRQQQQQQQQQQQQQQQEQ. Lysine 751 is covalently cross-linked (Glycyl lysine isopeptide (Lys-Gly) (interchain with G-Cter in SUMO2)). Phosphothreonine is present on threonine 753. Phosphoserine is present on residues serine 762 and serine 793. Disordered regions lie at residues 792-847, 893-918, and 950-1080; these read RSPD…EARK, EERR…IPPR, and ALPV…PGAV. Residues 880-904 adopt a coiled-coil conformation; that stretch reads IEVLTKKQRRLLEEERRKKEQAAQV. A compositionally biased stretch (polar residues) spans 960–986; sequence SWRTAVTAFSSTEPGTSEQGFKSSQGD. Positions 998 to 1007 are enriched in low complexity; sequence SSATSSQRSS. Composition is skewed to basic and acidic residues over residues 1025–1055 and 1062–1074; these read SKAD…EHRP and RSLK…EGAE. Phosphoserine is present on residues serine 1070 and serine 1159. Disordered stretches follow at residues 1177 to 1205, 1410 to 1443, and 1455 to 1486; these read KAWE…SSVG, QSIQ…TSRE, and ADSK…AWEP. The segment covering 1181–1191 has biased composition (polar residues); the sequence is NSPSLPEQSSP. The segment covering 1410 to 1421 has biased composition (low complexity); the sequence is QSIQLPPGQSLS. Positions 1457–1474 are enriched in polar residues; that stretch reads SKQNVPTGGSAPSPQAYR.

The sequence is that of Protein PRRC2B (Prrc2b) from Mus musculus (Mouse).